We begin with the raw amino-acid sequence, 122 residues long: S-adenosylmethionine decarboxylase proenzyme (122 aa).

The active-site Schiff-base intermediate with substrate; via pyruvic acid is the Ser69. Position 69 is a pyruvic acid (Ser); by autocatalysis (Ser69). His74 acts as the Proton acceptor; for processing activity in catalysis. Catalysis depends on Cys89, which acts as the Proton donor; for catalytic activity.

It belongs to the prokaryotic AdoMetDC family. Type 1 subfamily. In terms of assembly, heterotetramer of two alpha and two beta chains arranged as a dimer of alpha/beta heterodimers. Pyruvate is required as a cofactor. In terms of processing, is synthesized initially as an inactive proenzyme. Formation of the active enzyme involves a self-maturation process in which the active site pyruvoyl group is generated from an internal serine residue via an autocatalytic post-translational modification. Two non-identical subunits are generated from the proenzyme in this reaction, and the pyruvate is formed at the N-terminus of the alpha chain, which is derived from the carboxyl end of the proenzyme. The post-translation cleavage follows an unusual pathway, termed non-hydrolytic serinolysis, in which the side chain hydroxyl group of the serine supplies its oxygen atom to form the C-terminus of the beta chain, while the remainder of the serine residue undergoes an oxidative deamination to produce ammonia and the pyruvoyl group blocking the N-terminus of the alpha chain.

The enzyme catalyses S-adenosyl-L-methionine + H(+) = S-adenosyl 3-(methylsulfanyl)propylamine + CO2. The protein operates within amine and polyamine biosynthesis; S-adenosylmethioninamine biosynthesis; S-adenosylmethioninamine from S-adenosyl-L-methionine: step 1/1. Catalyzes the decarboxylation of S-adenosylmethionine to S-adenosylmethioninamine (dcAdoMet), the propylamine donor required for the synthesis of the polyamines spermine and spermidine from the diamine putrescine. The polypeptide is S-adenosylmethionine decarboxylase proenzyme (Saccharolobus islandicus (strain L.S.2.15 / Lassen #1) (Sulfolobus islandicus)).